A 509-amino-acid chain; its full sequence is MEDIKPNVELKSTQEQSVPTEGSELLNDYDLTKAHETENVDGTEGPANEDEDIGDDSMKVKDEYSERDENVLKPEPMGNAEEPEIPYSYSREYNEYENIKLERHVVSYDSSRPTSGKMNCDVCGLSCISFNVLMVHKRSHTGERPFQCNQCGASFTQKGNLLRHIKLHTGEKPFKCHLCNYACQRRDALTGHLRTHSVEKPYKCEFCGRSYKQRSSLEEHKERCRTFLQSTDLGETASVEARHIKAEMGSERALVLDRLASNVAKRKSSMPQKFIGEKRHCFDVSYNPSYMYEKESEMIQTRMMDQAINNAISYLGAEALRPLVQTPPAPTSEMVPVISSMYPIALTRAEMPNGAPQELEKKNIHLPEKSLPSERGLSPTNSGHDSTDTDSNHEERQNHIYQQNPMVPPRARNGMPLLKEGPRSYDLLKPPPICPRDSIKVINKEGEVTDVYRCDHCRVLFLDYVMFTIHMGCHGFRDPFECNMCGYRSHDRYEFSSHIARGEHRAMLK.

Positions 1 to 85 (MEDIKPNVEL…PMGNAEEPEI (85 aa)) are disordered. Residues 10–20 (LKSTQEQSVPT) show a composition bias toward polar residues. T20 is subject to Phosphothreonine. Residues 56–72 (DSMKVKDEYSERDENVL) are compositionally biased toward basic and acidic residues. Residues K61, K73, and K100 each participate in a glycyl lysine isopeptide (Lys-Gly) (interchain with G-Cter in SUMO2) cross-link. 3 C2H2-type zinc fingers span residues 118–140 (MNCD…KRSH), 146–168 (FQCN…IKLH), and 174–196 (FKCH…LRTH). Residues 202–224 (YKCEFCGRSYKQRSSLEEHKERC) form a C2H2-type 4; atypical zinc finger. K245 is covalently cross-linked (Glycyl lysine isopeptide (Lys-Gly) (interchain with G-Cter in SUMO2)). The residue at position 326 (T326) is a Phosphothreonine. The interval 365–421 (HLPEKSLPSERGLSPTNSGHDSTDTDSNHEERQNHIYQQNPMVPPRARNGMPLLKEG) is disordered. Phosphoserine is present on S378. A compositionally biased stretch (basic and acidic residues) spans 385-398 (DSTDTDSNHEERQN). The C2H2-type 5 zinc finger occupies 452–474 (YRCDHCRVLFLDYVMFTIHMGCH). The mediates homodimerization and heterodimerization stretch occupies residues 452 to 504 (YRCDHCRVLFLDYVMFTIHMGCHGFRDPFECNMCGYRSHDRYEFSSHIARGEH). The segment at 480–504 (FECNMCGYRSHDRYEFSSHIARGEH) adopts a C2H2-type 6; atypical zinc-finger fold.

The protein belongs to the Ikaros C2H2-type zinc-finger protein family. As to quaternary structure, homodimer. Heterodimer with other IKAROS family members. Interacts with IKZF4 and IKZF5. Interacts with IKZF1. Interacts with HRAS. Interacts with FOXP3; this interaction may be required for silencing target genes and regulating the suppressive activity of FOXP3-positive regulatory T-cells (Treg). Interacts with BCL21L; this interaction blocks the anti-apoptotic role of BCL21L. Associates with histone deacetylase complexes containing HDAC1, MTA2 and SIN3A.

Its subcellular location is the nucleus. The protein localises to the cytoplasm. In terms of biological role, transcription factor that plays an important role in the regulation of lymphocyte differentiation. Plays an essential role in regulation of B-cell differentiation, proliferation and maturation to an effector state. Involved in regulating BCL2 expression and controlling apoptosis in T-cells in an IL2-dependent manner. This chain is Zinc finger protein Aiolos (IKZF3), found in Bos taurus (Bovine).